The following is a 116-amino-acid chain: Large ribosomal subunit protein bL20 (116 aa).

Belongs to the bacterial ribosomal protein bL20 family.

Binds directly to 23S ribosomal RNA and is necessary for the in vitro assembly process of the 50S ribosomal subunit. It is not involved in the protein synthesizing functions of that subunit. This is Large ribosomal subunit protein bL20 from Fusobacterium nucleatum subsp. nucleatum (strain ATCC 25586 / DSM 15643 / BCRC 10681 / CIP 101130 / JCM 8532 / KCTC 2640 / LMG 13131 / VPI 4355).